The following is a 320-amino-acid chain: UDP-3-O-acyl-N-acetylglucosamine deacetylase (320 aa).

Zn(2+) contacts are provided by histidine 92, histidine 251, and aspartate 255. Catalysis depends on histidine 278, which acts as the Proton donor.

Belongs to the LpxC family. The cofactor is Zn(2+).

It carries out the reaction a UDP-3-O-[(3R)-3-hydroxyacyl]-N-acetyl-alpha-D-glucosamine + H2O = a UDP-3-O-[(3R)-3-hydroxyacyl]-alpha-D-glucosamine + acetate. It participates in glycolipid biosynthesis; lipid IV(A) biosynthesis; lipid IV(A) from (3R)-3-hydroxytetradecanoyl-[acyl-carrier-protein] and UDP-N-acetyl-alpha-D-glucosamine: step 2/6. Its function is as follows. Catalyzes the hydrolysis of UDP-3-O-myristoyl-N-acetylglucosamine to form UDP-3-O-myristoylglucosamine and acetate, the committed step in lipid A biosynthesis. In Psychrobacter arcticus (strain DSM 17307 / VKM B-2377 / 273-4), this protein is UDP-3-O-acyl-N-acetylglucosamine deacetylase.